The chain runs to 627 residues: Ras and EF-hand domain-containing protein homolog (627 aa).

A coiled-coil region spans residues Y55–L245. Phosphoserine is present on residues S266 and S272. Residues A438–S443, N541–D544, and A578–K579 contribute to the GTP site.

The protein belongs to the small GTPase superfamily. Rab family. In terms of assembly, homodimer. Interacts with the dynein-dynactin complex.

The protein resides in the cytoplasm. The protein localises to the perinuclear region. In terms of biological role, binds predominantly GDP, and also GTP. Acts as a dynein adapter protein that activates dynein-mediated transport and dynein-dynactin motility on microtubules. The polypeptide is Ras and EF-hand domain-containing protein homolog (Rasef) (Mus musculus (Mouse)).